An 811-amino-acid chain; its full sequence is Ribonucleoside-diphosphate reductase large chain (811 aa).

The ATP-cone domain maps to 1-92 (MFVYKRDGRQ…VSNLHKQTEK (92 aa)). ATP is bound by residues 5–6 (KR), 11–17 (EKVAFDK), threonine 53, and aspartate 57. The GDP site is built by serine 202 and serine 217. Cysteines 218 and 444 form a disulfide. Residues 226–228 (DSI), lysine 243, arginine 256, and 263–264 (AG) each bind dTTP. Asparagine 427 is a binding site for GDP. The active-site Proton acceptor is asparagine 427. Cysteine 429 (cysteine radical intermediate) is an active-site residue. GDP is bound by residues glutamate 431 and 603-606 (TAST). The Proton acceptor role is filled by glutamate 431.

Belongs to the ribonucleoside diphosphate reductase large chain family. In terms of assembly, heterodimer of a large and a small subunit. Interacts with SPD1.

It carries out the reaction a 2'-deoxyribonucleoside 5'-diphosphate + [thioredoxin]-disulfide + H2O = a ribonucleoside 5'-diphosphate + [thioredoxin]-dithiol. With respect to regulation, under complex allosteric control mediated by deoxynucleoside triphosphates and ATP binding to separate specificity and activation sites on the large subunit. The type of nucleotide bound at the specificity site determines substrate preference. It seems probable that ATP makes the enzyme reduce CDP and UDP, dGTP favors ADP reduction and dTTP favors GDP reduction. Stimulated by ATP and inhibited by dATP binding to the activity site. In terms of biological role, provides the precursors necessary for DNA synthesis. Catalyzes the biosynthesis of deoxyribonucleotides from the corresponding ribonucleotides. This is Ribonucleoside-diphosphate reductase large chain (cdc22) from Schizosaccharomyces pombe (strain 972 / ATCC 24843) (Fission yeast).